The following is a 337-amino-acid chain: Probable phospholipase A1 magnifin (337 aa).

An N-terminal signal peptide occupies residues 1 to 21 (MNLKYLLLFFCLVQVLHYCYS). The propeptide occupies 22–33 (HGDPSLSNELDR). An intrachain disulfide couples Cys-39 to Cys-123. Ser-173 (nucleophile) is an active-site residue. Asp-201 serves as the catalytic Charge relay system. Disulfide bonds link Cys-212–Cys-217 and Cys-255–Cys-264. His-266 acts as the Charge relay system in catalysis. Intrachain disulfides connect Cys-281–Cys-305, Cys-282–Cys-330, and Cys-298–Cys-303.

It belongs to the AB hydrolase superfamily. Lipase family. Expressed by the venom gland.

Its subcellular location is the secreted. The enzyme catalyses a 1,2-diacyl-sn-glycero-3-phosphocholine + H2O = a 2-acyl-sn-glycero-3-phosphocholine + a fatty acid + H(+). In terms of biological role, catalyzes the hydrolysis of phosphatidylcholine with phospholipase A1 activity. May act as an allergen and induce hemolytic activity. In vivo, induces dose-dependent platelet aggregation (nanomolar concentration) and induces thrombosis. The polypeptide is Probable phospholipase A1 magnifin (Vespa magnifica (Hornet)).